The primary structure comprises 663 residues: Alcohol oxidase 2 (663 aa).

8–38 serves as a coordination point for FAD; the sequence is DILVLGGGSSGSCIAGRLANLDHSLKVGLIE. His-567 serves as the catalytic Proton acceptor. The Microbody targeting signal motif lies at 661–663; it reads ARF.

This sequence belongs to the GMC oxidoreductase family. In terms of assembly, homooctamer. It depends on FAD as a cofactor.

The protein resides in the peroxisome matrix. It catalyses the reaction a primary alcohol + O2 = an aldehyde + H2O2. It functions in the pathway energy metabolism; methane degradation. Its function is as follows. Minor isoform of alcohol oxidase, which catalyzes the oxidation of methanol to formaldehyde and hydrogen peroxide, the first step in the methanol utilization pathway of methylotrophic yeasts. This chain is Alcohol oxidase 2 (AOX2), found in Komagataella phaffii (strain ATCC 76273 / CBS 7435 / CECT 11047 / NRRL Y-11430 / Wegner 21-1) (Yeast).